The sequence spans 152 residues: Large ribosomal subunit protein bL9 (152 aa).

Belongs to the bacterial ribosomal protein bL9 family.

Its function is as follows. Binds to the 23S rRNA. This is Large ribosomal subunit protein bL9 from Corynebacterium urealyticum (strain ATCC 43042 / DSM 7109).